We begin with the raw amino-acid sequence, 205 residues long: Protein TON_1965 (205 aa).

The AMMECR1 domain occupies 7–201 (EWGEFLVRLA…EEYPKGPVKR (195 aa)).

In Thermococcus onnurineus (strain NA1), this protein is Protein TON_1965.